The following is a 190-amino-acid chain: UPF0200 protein MTH_434 (190 aa).

10 to 17 (GMPGAGKG) is a binding site for ATP.

It belongs to the UPF0200 family.

The sequence is that of UPF0200 protein MTH_434 from Methanothermobacter thermautotrophicus (strain ATCC 29096 / DSM 1053 / JCM 10044 / NBRC 100330 / Delta H) (Methanobacterium thermoautotrophicum).